We begin with the raw amino-acid sequence, 248 residues long: 2,3-bisphosphoglycerate-dependent phosphoglycerate mutase (248 aa).

Residues arginine 8–asparagine 15, threonine 21–glycine 22, arginine 60, glutamate 87–tyrosine 90, lysine 98, arginine 114–arginine 115, and glycine 183–asparagine 184 each bind substrate. Histidine 9 functions as the Tele-phosphohistidine intermediate in the catalytic mechanism. The Proton donor/acceptor role is filled by glutamate 87.

This sequence belongs to the phosphoglycerate mutase family. BPG-dependent PGAM subfamily.

It carries out the reaction (2R)-2-phosphoglycerate = (2R)-3-phosphoglycerate. It functions in the pathway carbohydrate degradation; glycolysis; pyruvate from D-glyceraldehyde 3-phosphate: step 3/5. Functionally, catalyzes the interconversion of 2-phosphoglycerate and 3-phosphoglycerate. In Borrelia hermsii (strain HS1 / DAH), this protein is 2,3-bisphosphoglycerate-dependent phosphoglycerate mutase.